The chain runs to 169 residues: NAD(P)H-quinone oxidoreductase subunit J, chloroplastic (169 aa).

This sequence belongs to the complex I 30 kDa subunit family. In terms of assembly, NDH is composed of at least 16 different subunits, 5 of which are encoded in the nucleus.

The protein resides in the plastid. The protein localises to the chloroplast thylakoid membrane. It carries out the reaction a plastoquinone + NADH + (n+1) H(+)(in) = a plastoquinol + NAD(+) + n H(+)(out). The catalysed reaction is a plastoquinone + NADPH + (n+1) H(+)(in) = a plastoquinol + NADP(+) + n H(+)(out). In terms of biological role, NDH shuttles electrons from NAD(P)H:plastoquinone, via FMN and iron-sulfur (Fe-S) centers, to quinones in the photosynthetic chain and possibly in a chloroplast respiratory chain. The immediate electron acceptor for the enzyme in this species is believed to be plastoquinone. Couples the redox reaction to proton translocation, and thus conserves the redox energy in a proton gradient. This Physcomitrium patens (Spreading-leaved earth moss) protein is NAD(P)H-quinone oxidoreductase subunit J, chloroplastic.